The primary structure comprises 172 residues: Cytidylate kinase (172 aa).

Residue 8 to 16 (GPPGSGKST) coordinates ATP.

Belongs to the cytidylate kinase family. Type 2 subfamily.

The protein localises to the cytoplasm. The catalysed reaction is CMP + ATP = CDP + ADP. It catalyses the reaction dCMP + ATP = dCDP + ADP. In Ignicoccus hospitalis (strain KIN4/I / DSM 18386 / JCM 14125), this protein is Cytidylate kinase.